Reading from the N-terminus, the 267-residue chain is tRNA pseudouridine synthase A (267 aa).

D55 acts as the Nucleophile in catalysis. Residue Y111 participates in substrate binding.

The protein belongs to the tRNA pseudouridine synthase TruA family.

It carries out the reaction uridine(38/39/40) in tRNA = pseudouridine(38/39/40) in tRNA. Formation of pseudouridine at positions 38, 39 and 40 in the anticodon stem and loop of transfer RNAs. The chain is tRNA pseudouridine synthase A from Thermococcus gammatolerans (strain DSM 15229 / JCM 11827 / EJ3).